Reading from the N-terminus, the 696-residue chain is Serine/threonine-protein kinase sck1 (696 aa).

Disordered stretches follow at residues 1-59 and 77-118; these read MTEI…YDPV and HKEQ…TPPS. Residues 11–37 show a composition bias toward polar residues; sequence SSNSENTNQASPSTIQSHSTQPVLSND. Basic and acidic residues-rich tracts occupy residues 38–49 and 77–88; these read HSTKVNDYEGKE and HKEQSLKEDKES. The C2 domain occupies 122-272; sequence IRHDTVVPKD…VQEAWYKLEP (151 aa). Positions 302-563 constitute a Protein kinase domain; it reads FTALRLIGKG…TTELKEHPFF (262 aa). ATP-binding positions include 308–316 and Lys331; that span reads IGKGTFGQV. The active-site Proton acceptor is the Asp428. The AGC-kinase C-terminal domain maps to 564-643; it reads ADINWDLLSK…VNKSIDEQFQ (80 aa). The residue at position 632 (Thr632) is a Phosphothreonine. The residue at position 665 (Ser665) is a Phosphoserine.

The protein belongs to the protein kinase superfamily. AGC Ser/Thr protein kinase family. cAMP subfamily.

The catalysed reaction is L-seryl-[protein] + ATP = O-phospho-L-seryl-[protein] + ADP + H(+). It carries out the reaction L-threonyl-[protein] + ATP = O-phospho-L-threonyl-[protein] + ADP + H(+). In terms of biological role, protein kinase that is part of growth control pathway which is at least partially redundant with the cAMP pathway. Required for trehalase activation. This chain is Serine/threonine-protein kinase sck1 (sck1), found in Schizosaccharomyces pombe (strain 972 / ATCC 24843) (Fission yeast).